The following is a 426-amino-acid chain: Pregnancy-specific beta-1-glycoprotein 9 (426 aa).

An N-terminal signal peptide occupies residues 1-34 (MGPLPAPSCTQRITWKGLLLTASLLNFWNPPTTA). The Ig-like V-type domain maps to 35-144 (EVTIEAQPPK…IRHFTFTLYL (110 aa)). Residues Asn-104 and Asn-111 are each glycosylated (N-linked (GlcNAc...) asparagine). The Cell attachment site signature appears at 127–129 (RGD). 3 Ig-like C2-type domains span residues 147–234 (PKPY…VTLN), 242–326 (PYIT…PVIL), and 335–410 (PRIY…KSMT). 3 disulfide bridges follow: Cys-169-Cys-217, Cys-262-Cys-310, and Cys-354-Cys-394. Residues Asn-199, Asn-268, Asn-303, and Asn-387 are each glycosylated (N-linked (GlcNAc...) asparagine).

It belongs to the immunoglobulin superfamily. CEA family. In terms of assembly, interacts with latency-associated peptide; leading to TGFB1 activation.

It is found in the secreted. Its function is as follows. Binds to the small latent transforming growth factor-beta complex, consisting of the N-terminal TGFB1 latency-associated peptide (LAP) and the mature form of TGFB1, thereby leading to the activation of TGFB1. The activation of TGFB1 leads to stimulation of naive CD4(+) T-cells to increase FoxP3 expression and to an increase in the number of FoxP3(+) regulatory T-cells. Induces the differentiation of a suppressive CD4(+)LAP(+)FoxP3(-) T-cell subset. Induces the secretion of TGFB1 in macrophages, but not in activated CD4(+) T-cells. May reduce the expression of several pro-inflammatory cytokines and chemokines by CD4(+) T-cells, including IL2 and IL6. This is Pregnancy-specific beta-1-glycoprotein 9 (PSG9) from Homo sapiens (Human).